A 497-amino-acid chain; its full sequence is Cytochrome P450 3A18 (497 aa).

Position 442 (C442) interacts with heme.

Belongs to the cytochrome P450 family. Requires heme as cofactor.

The protein localises to the endoplasmic reticulum membrane. It is found in the microsome membrane. The catalysed reaction is an organic molecule + reduced [NADPH--hemoprotein reductase] + O2 = an alcohol + oxidized [NADPH--hemoprotein reductase] + H2O + H(+). Functionally, catalyzes 16-beta- and 6-alpha-hydroxylations of testosterone. This is Cytochrome P450 3A18 (Cyp3a18) from Rattus norvegicus (Rat).